Reading from the N-terminus, the 266-residue chain is Pyridoxal phosphate phosphatase YigL (266 aa).

D8 (nucleophile) is an active-site residue. Mg(2+) is bound at residue D8. A phosphate-binding site is contributed by L9. Residue D10 coordinates Mg(2+). Residues 42–43 (TG) and K191 contribute to the phosphate site. D214 contacts Mg(2+). Residue N217 coordinates phosphate.

It belongs to the HAD-like hydrolase superfamily. Cof family. It depends on Mg(2+) as a cofactor. Mn(2+) serves as cofactor. Co(2+) is required as a cofactor. The cofactor is Zn(2+).

The catalysed reaction is pyridoxal 5'-phosphate + H2O = pyridoxal + phosphate. The enzyme catalyses sugar phosphate + H2O = sugar + phosphate.. Its function is as follows. Catalyzes Strongly the dephosphorylation of pyridoxal-phosphate (PLP) and moderately the dephosphorylation of 2-deoxyglucose 6-phosphate (2bGLU6P) and beta-glucose 6-phosphate (bGlu6P). Also hydrolyzes both purines (GMP and IMP) and pyrimidines as secondary substrates. In Escherichia coli (strain K12), this protein is Pyridoxal phosphate phosphatase YigL (yigL).